A 96-amino-acid polypeptide reads, in one-letter code: Co-chaperonin GroES (96 aa).

Belongs to the GroES chaperonin family. As to quaternary structure, heptamer of 7 subunits arranged in a ring. Interacts with the chaperonin GroEL.

The protein localises to the cytoplasm. In terms of biological role, together with the chaperonin GroEL, plays an essential role in assisting protein folding. The GroEL-GroES system forms a nano-cage that allows encapsulation of the non-native substrate proteins and provides a physical environment optimized to promote and accelerate protein folding. GroES binds to the apical surface of the GroEL ring, thereby capping the opening of the GroEL channel. This chain is Co-chaperonin GroES, found in Buchnera aphidicola subsp. Schizaphis graminum (strain Sg).